A 770-amino-acid polypeptide reads, in one-letter code: Amyloid-beta precursor protein (770 aa).

The N-terminal stretch at 1-17 is a signal peptide; it reads MLPSLALLLLAAWTVRA. The Extracellular segment spans residues 18–701; that stretch reads LEVPTDGNAG…AEDVGSNKGA (684 aa). A GFLD subdomain region spans residues 28–123; that stretch reads LLAEPQIAMF…PYRCLVGEFV (96 aa). Residues 28–189 enclose the E1 domain; the sequence is LLAEPQIAMF…RGVEFVCCPL (162 aa). Intrachain disulfides connect Cys-38-Cys-62, Cys-73-Cys-117, Cys-98-Cys-105, Cys-133-Cys-187, Cys-144-Cys-174, and Cys-158-Cys-186. 96 to 110 is a heparin binding site; the sequence is NWCKRGRKQCKTHTH. A cuBD subdomain region spans residues 131–189; the sequence is DKCKFLHQERMDVCETHLHWHTVAKETCSEKSTNLHDYGMLLPCGIDKFRGVEFVCCPL. 3 residues coordinate Cu(2+): His-147, His-151, and Tyr-168. The zinc-binding stretch occupies residues 181–188; sequence GVEFVCCP. Zn(2+)-binding residues include Glu-183, Cys-186, and Cys-187. The segment covering 193-207 has biased composition (acidic residues); sequence SDSVDSADAEEDDSD. The disordered stretch occupies residues 193–284; sequence SDSVDSADAE…TTTTTTESVE (92 aa). A Phosphoserine; by CK2 modification is found at Ser-198. Ser-206 carries the post-translational modification Phosphoserine; by CK1. Tyr-217 and Tyr-262 each carry sulfotyrosine. Residues 228–264 are compositionally biased toward acidic residues; it reads VAEEEEVADVEEEEADDDEDVEDGDEVEEEAEEPYEE. Residues 268–281 show a composition bias toward low complexity; that stretch reads RTTSTATTTTTTTE. Cystine bridges form between Cys-291–Cys-341, Cys-300–Cys-324, and Cys-316–Cys-337. The region spanning 291–341 is the BPTI/Kunitz inhibitor domain; sequence CSEQAETGPCRAMISRWYFDVTEGKCVPFFYGGCGGNRNNFDTEEYCMAVC. Tyr-336 carries the sulfotyrosine modification. Positions 344-365 match the OX-2 motif; the sequence is VSTQSLLKTTSEPLPQDPDKLP. The E2 domain occupies 374–565; that stretch reads AVDKYLETPG…EEIQDEVDEL (192 aa). The heparin-binding stretch occupies residues 391 to 423; the sequence is FQKAKERLEAKHRERMSQVMREWEEAERQAKNL. Ser-441 carries the phosphoserine modification. Residues 491–522 are heparin-binding; sequence FNMLKKYVRAEQKDRQHTLKHFEHVRMVDPKK. Tyr-497 carries the phosphotyrosine modification. A collagen-binding region spans residues 523–540; the sequence is AAQIRSQVMTHLRVIYER. N-linked (GlcNAc...) asparagine glycosylation is found at Asn-542 and Asn-571. The Cu(2+) site is built by His-677 and His-685. The Zn(2+) site is built by His-677 and His-685. An interaction with PSEN1 region spans residues 695–722; it reads VGSNKGAIIGLMVGGVVIATVIVITLVM. The helical transmembrane segment at 702-722 threads the bilayer; it reads IIGLMVGGVVIATVIVITLVM. The Cytoplasmic segment spans residues 723–770; that stretch reads LKKKQYTSIHHGVVEVDAAVTPEERHLSKMQQNGYENPTYKFFEQMQN. The short motif at 724–734 is the Basolateral sorting signal element; it reads KKKQYTSIHHG. Thr-729 carries the post-translational modification Phosphothreonine. Ser-730 carries the phosphoserine; by APP-kinase I modification. The interval 732 to 751 is interaction with G(o)-alpha; the sequence is HHGVVEVDAAVTPEERHLSK. The residue at position 743 (Thr-743) is a Phosphothreonine; by CDK5 and MAPK10 and LRRK2. The tract at residues 756 to 770 is interaction with DAB2; the sequence is GYENPTYKFFEQMQN. Positions 756-770 are required for the interaction with KIF5B and for anterograde transport in axons; it reads GYENPTYKFFEQMQN. The residue at position 757 (Tyr-757) is a Phosphotyrosine; by ABL1. The YENPXY motif; contains endocytosis signal motif lies at 757 to 762; sequence YENPTY. Residue Lys-763 forms a Glycyl lysine isopeptide (Lys-Gly) (interchain with G-Cter in ubiquitin) linkage.

The protein belongs to the APP family. As to quaternary structure, binds, via its C-terminus, to the PID domain of several cytoplasmic proteins, including APBB family members, the APBA family, MAPK8IP1, SHC1, NUMB and DAB1. Binding to DAB1 inhibits its serine phosphorylation. Interacts (via NPXY motif) with DAB2 (via PID domain); the interaction is impaired by tyrosine phosphorylation of the NPXY motif. Also interacts with GPCR-like protein BPP, APPBP1, IB1, KNS2 (via its TPR domains), APPBP2 (via BaSS) and DDB1. In vitro, it binds MAPT via the MT-binding domains. Associates with microtubules in the presence of ATP and in a kinesin-dependent manner. Interacts, through a C-terminal domain, with GNAO1. Amyloid-beta protein 42 binds CHRNA7 in hippocampal neurons. Amyloid-beta associates with HADH2. Interacts with ANKS1B and AGER. Interacts with CPEB1. Interacts with ITM2B. Interacts with ITM2C. Interacts with IDE. Can form homodimers; dimerization is enhanced in the presence of Cu(2+) ions. Can form homodimers; this is promoted by heparin binding. Amyloid-beta protein 40 interacts with S100A9. CTF-alpha product of APP interacts with GSAP. Isoform APP695 interacts with SORL1 (via N-terminal ectodomain); this interaction retains APP in the trans-Golgi network and reduces processing into soluble APP-alpha and amyloid-beta peptides. The C99 fragment also interacts with SORL1. Isoform APP751 interacts with SORL1. Isoform APP770 interacts with SORL1. Interacts with PLD3. Interacts with VDAC1. Interacts with NSG1; could regulate APP processing. Amyloid-beta protein 42 interacts with FPR2. Interacts with SYT7. Interacts (via transmembrane region) with PSEN1; the interaction is direct. Interacts with LRRK2. Interacts (via cytoplasmic domain) with KIF5B. Interacts (via C-terminus) with APBB2/FE65L1 (via C-terminus). Interacts (via intracellular domain) with APBB3. Proteolytically processed under normal cellular conditions. Cleavage either by alpha-secretase, beta-secretase or theta-secretase leads to generation and extracellular release of soluble APP peptides, S-APP-alpha and S-APP-beta, and the retention of corresponding membrane-anchored C-terminal fragments, C80, C83 and C99. Subsequent processing of C80 and C83 by gamma-secretase yields P3 peptides. This is the major secretory pathway and is non-amyloidogenic. Alternatively, presenilin/nicastrin-mediated gamma-secretase processing of C99 releases the amyloid-beta proteins, amyloid-beta protein 40 and amyloid-beta protein 42, major components of amyloid plaques, and the cytotoxic C-terminal fragments, gamma-CTF(50), gamma-CTF(57) and gamma-CTF(59). PSEN1 cleavage is more efficient with C83 than with C99 as substrate (in vitro). Amyloid-beta protein 40 and Amyloid-beta protein 42 are cleaved by ACE. Many other minor amyloid-beta peptides, amyloid-beta 1-X peptides, are found in cerebral spinal fluid (CSF) including the amyloid-beta X-15 peptides, produced from the cleavage by alpha-secretase. In terms of processing, proteolytically cleaved by caspases during neuronal apoptosis. Cleavage at Asp-739 by either CASP6, CASP8 or CASP9 results in the production of the neurotoxic C31 peptide and the increased production of amyloid-beta peptides. Post-translationally, N- and O-glycosylated. Phosphorylation in the C-terminal on tyrosine, threonine and serine residues is neuron-specific. Phosphorylation can affect APP processing, neuronal differentiation and interaction with other proteins. Phosphorylated on Thr-743 in neuronal cells by Cdc5 kinase and Mapk10, in dividing cells by Cdc2 kinase in a cell-cycle dependent manner with maximal levels at the G2/M phase and, in vitro, by GSK-3-beta. The Thr-743 phosphorylated form causes a conformational change which reduces binding of Fe65 family members. In dopaminergic (DA) neurons, phosphorylation on Thr-743 by LRKK2 promotes the production and the nuclear translocation of the APP intracellular domain (AICD) which induces DA neuron apoptosis. Phosphorylation on Tyr-757 is required for SHC binding. Phosphorylated in the extracellular domain by casein kinases on both soluble and membrane-bound APP. This phosphorylation is inhibited by heparin. In terms of processing, extracellular binding and reduction of copper, results in a corresponding oxidation of Cys-144 and Cys-158, and the formation of a disulfide bond. Post-translationally, trophic-factor deprivation triggers the cleavage of surface APP by beta-secretase to release sAPP-beta which is further cleaved to release an N-terminal fragment of APP (N-APP). Amyloid-beta peptides are degraded by IDE. In terms of processing, sulfated on tyrosine residues. As to expression, expressed in the brain with expression in cortex, cerebellum, hippocampus, olfactory bulb, neurons, astrocytes and microglia (at protein level). Expressed in the retinal lens. Expressed at a low level in muscle cells (at protein level). In terms of tissue distribution, expressed in kidney. Widely expressed. Expressed in several different brain regions including hippocampus, substantia nigra pars compacta and cerebellum. Within the cerebellum, abundantly expressed in Purkinje cells. As to expression, expressed in the brain, kidney and liver. Expressed in several different brain regions including hippocampus, substantia nigra pars compacta and cerebellum. Within the cerebellum, abundantly expressed in Purkinje cells. In terms of tissue distribution, expressed in several different brain regions including hippocampus, substantia nigra pars compacta and cerebellum. Within the cerebellum, abundantly expressed in Purkinje cells.

It is found in the cell membrane. The protein resides in the membrane. It localises to the perikaryon. Its subcellular location is the cell projection. The protein localises to the growth cone. It is found in the clathrin-coated pit. The protein resides in the early endosome. It localises to the cytoplasmic vesicle. Its subcellular location is the golgi apparatus. The protein localises to the trans-Golgi network. It is found in the endoplasmic reticulum. The protein resides in the secreted. It localises to the cell surface. Its subcellular location is the nucleus. The protein localises to the cytoplasm. In terms of biological role, functions as a cell surface receptor and performs physiological functions on the surface of neurons relevant to neurite growth, neuronal adhesion and axonogenesis. Interaction between APP molecules on neighboring cells promotes synaptogenesis. Involved in cell mobility and transcription regulation through protein-protein interactions. Can promote transcription activation through binding to APBB1-KAT5 and inhibit Notch signaling through interaction with Numb. Couples to apoptosis-inducing pathways such as those mediated by G(o) and JIP. Inhibits G(o)-alpha ATPase activity. Acts as a kinesin I membrane receptor, mediating the axonal transport of beta-secretase and presenilin 1. By acting as a kinesin I membrane receptor, plays a role in axonal anterograde transport of cargo towards synapses in axons. May be involved in copper homeostasis/oxidative stress through copper ion reduction. Can regulate neurite outgrowth through binding to components of the extracellular matrix such as heparin and collagen I and IV. The splice isoforms that contain the BPTI domain possess protease inhibitor activity. Induces a AGER-dependent pathway that involves activation of p38 MAPK, resulting in internalization of amyloid-beta peptide and leading to mitochondrial dysfunction in cultured cortical neurons. Provides Cu(2+) ions for GPC1 which are required for release of nitric oxide (NO) and subsequent degradation of the heparan sulfate chains on GPC1. Its function is as follows. Amyloid-beta peptides are lipophilic metal chelators with metal-reducing activity. Binds transient metals such as copper, zinc and iron. Rat and mouse amyloid-beta peptides bind only weakly transient metals and have little reducing activity due to substitutions of transient metal chelating residues. Amyloid-beta protein 42 may activate mononuclear phagocytes in the brain and elicit inflammatory responses. Promotes both tau aggregation and TPK II-mediated phosphorylation. Also binds GPC1 in lipid rafts. The gamma-CTF peptides as well as the caspase-cleaved peptides, including C31, are potent enhancers of neuronal apoptosis. The chain is Amyloid-beta precursor protein from Mus musculus (Mouse).